Reading from the N-terminus, the 164-residue chain is CDP-archaeol synthase (164 aa).

Helical transmembrane passes span 3-23 (LFVF…AVLA), 53-73 (GLAI…LLHP), 77-97 (LLDA…GAFI), and 126-146 (SLYA…TPII).

It belongs to the CDP-archaeol synthase family. The cofactor is Mg(2+).

It localises to the cell membrane. It catalyses the reaction 2,3-bis-O-(geranylgeranyl)-sn-glycerol 1-phosphate + CTP + H(+) = CDP-2,3-bis-O-(geranylgeranyl)-sn-glycerol + diphosphate. Its pathway is membrane lipid metabolism; glycerophospholipid metabolism. Functionally, catalyzes the formation of CDP-2,3-bis-(O-geranylgeranyl)-sn-glycerol (CDP-archaeol) from 2,3-bis-(O-geranylgeranyl)-sn-glycerol 1-phosphate (DGGGP) and CTP. This reaction is the third ether-bond-formation step in the biosynthesis of archaeal membrane lipids. This chain is CDP-archaeol synthase, found in Pyrobaculum arsenaticum (strain DSM 13514 / JCM 11321 / PZ6).